The chain runs to 177 residues: Interleukin-7 (177 aa).

An N-terminal signal peptide occupies residues 1 to 25; the sequence is MFHVSFRYIFGLPPLILVLLPVASS. Disulfide bonds link Cys27-Cys166, Cys59-Cys154, and Cys72-Cys117. N-linked (GlcNAc...) asparagine glycans are attached at residues Asn95, Asn116, and Asn141.

This sequence belongs to the IL-7/IL-9 family. As to quaternary structure, interacts with IL7R and CSF2RG.

The protein localises to the secreted. In terms of biological role, hematopoietic cytokine that plays an essential role in the development, expansion, and survival of naive and memory T-cells and B-cells thereby regulating the number of mature lymphocytes and maintaining lymphoid homeostasis. Mechanistically, exerts its biological effects through a receptor composed of IL7RA subunit and the cytokine receptor common subunit gamma/CSF2RG. Binding to the receptor leads to activation of various kinases including JAK1 or JAK3 depending on the cell type and subsequently propagation of signals through activation of several downstream signaling pathways including the PI3K/Akt/mTOR or the JAK-STAT5. This is Interleukin-7 (IL7) from Homo sapiens (Human).